A 1514-amino-acid polypeptide reads, in one-letter code: Polycomb group protein ASXL1 (1514 aa).

The region spanning arginine 11–aspartate 86 is the HTH HARE-type domain. Disordered regions lie at residues alanine 95–proline 170 and histidine 183–glutamate 249. The span at aspartate 98–aspartate 107 shows a compositional bias: acidic residues. Polar residues predominate over residues cysteine 111 to leucine 145. Residues serine 199–serine 209 show a composition bias toward low complexity. Positions lysine 243–arginine 246 are interaction with nucleosomal DNA forming a DNA clamp with BAP1. Residues proline 255–glycine 364 form the DEUBAD domain. The LXXLL motif 1 signature appears at leucine 284 to leucine 288. The tract at residues leucine 300 to glycine 655 is interaction with NCOA1. The NEF motif motif lies at asparagine 310–histidine 315. The interval arginine 336–lysine 346 is interaction with nucleosomal DNA. 5 disordered regions span residues glutamate 378–glutamine 543, threonine 635–methionine 823, serine 895–tryptophan 914, serine 926–glutamate 952, and isoleucine 964–serine 995. A Nuclear localization signal motif is present at residues phenylalanine 408–aspartate 415. A compositionally biased stretch (polar residues) spans valine 458–glutamine 473. Serine 498 and serine 500 each carry phosphoserine. 2 stretches are compositionally biased toward basic and acidic residues: residues glutamine 514–glutamate 525 and proline 533–glutamine 543. Residues isoleucine 638–glutamate 654 are compositionally biased toward gly residues. Residues proline 678–glutamine 692 show a composition bias toward polar residues. Basic and acidic residues-rich tracts occupy residues alanine 713–leucine 728 and leucine 779–glutamine 793. The LXXLL motif 2 signature appears at leucine 808 to leucine 812. A compositionally biased stretch (polar residues) spans histidine 971–aspartate 980. The required for interaction with RARA stretch occupies residues leucine 1082–leucine 1087. 3 disordered regions span residues lysine 1095–arginine 1131, glutamate 1213–leucine 1234, and serine 1256–aspartate 1338. Positions aspartate 1119–asparagine 1129 are enriched in polar residues. Composition is skewed to polar residues over residues serine 1256–alanine 1269 and serine 1313–threonine 1324. The PHD-type; atypical zinc-finger motif lies at serine 1476–valine 1513.

The protein belongs to the Asx family. In terms of assembly, core component of the polycomb repressive deubiquitinase (PR-DUB) complex, at least composed of BAP1, one of ASXL1, ASXL2 or (probably) ASXL3, and one of MBD5 or MBD6. Distinct combinations of ASXL and MBD proteins may preferentially bind specific histone modification marks. The PR-DUB core associates with a number of accessory proteins, including FOXK1, FOXK2, KDM1B, HCFC1 and OGT; KDM1B specifically associates with ASXL2 PR-DUB complexes. Interacts (via DEUBAD domain) with BAP1 (via ULD domain); the interaction is direct and forms a ubiquitin binding cleft. The interaction with BAP1 is important for maintaining BAP1 stability. Together with BAP1, associates (via DEUBAD domain) with nucleosomes; interacts with nucleosomal DNA and stabilizes the orientation of the nucleosome to line up the PR-DUB complex active site with its H2AK118ub1 substrate. Interacts (via PHD domain) with MBD5 and MBD6 (via MBD domain); the interaction is probably direct and mediates association of MBD proteins with the PR-DUB core. Interacts with RARA, RXRA. Interacts with NCOA1. Interacts with PPARA and PPARG. In terms of processing, ubiquitinated by TRIP12, leading to its subsequent degradation following binding of N(6)-methyladenine methylated DNA (6mA).

It localises to the nucleus. Its function is as follows. Probable Polycomb group (PcG) protein involved in transcriptional regulation mediated by ligand-bound nuclear hormone receptors, such as retinoic acid receptors (RARs) and peroxisome proliferator-activated receptor gamma (PPARG). Acts as a coactivator of RARA and RXRA through association with NCOA1. Acts as a corepressor for PPARG and suppresses its adipocyte differentiation-inducing activity. Non-catalytic component of the PR-DUB complex, a complex that specifically mediates deubiquitination of histone H2A monoubiquitinated at 'Lys-119' (H2AK119ub1). Acts as a sensor of N(6)-methyladenine methylation on DNA (6mA): recognizes and binds 6mA DNA, leading to its ubiquitination and degradation by TRIP12, thereby inactivating the PR-DUB complex and regulating Polycomb silencing. The PR-DUB complex is an epigenetic regulator of gene expression and acts as a transcriptional coactivator, affecting genes involved in development, cell communication, signaling, cell proliferation and cell viability. ASXL1, ASXL2 and ASXL3 function redundantly in the PR-DUB complex. The ASXL proteins are essential for chromatin recruitment and transcriptional activation of associated genes. ASXL1 and ASXL2 are important for BAP1 protein stability. Together with BAP1, negatively regulates epithelial-mesenchymal transition (EMT) of trophoblast stem cells during placental development by regulating genes involved in epithelial cell integrity, cell adhesion and cytoskeletal organization. In Mus musculus (Mouse), this protein is Polycomb group protein ASXL1 (Asxl1).